The chain runs to 243 residues: Outer membrane protein A (243 aa).

5 beta stranded membrane-spanning segments follow: residues 1-8 (LTAKLGYP), 13-21 (LDIYTRLGG), 47-56 (PVFAGGLEWA), 61-68 (IATRLEYQ), and 87-95 (LLSVGVSYR). 4 tandem repeats follow at residues 107–108 (AP), 109–110 (AP), 111–112 (AP), and 113–114 (AP). Residues 107 to 114 (APAPAPAP) form a 4 X 2 AA tandem repeats of A-P region. The 128-residue stretch at 116 to 243 (VQTKHFTLKS…RRVEIEVKGI (128 aa)) folds into the OmpA-like domain. Residues Cys217 and Cys229 are joined by a disulfide bond.

This sequence belongs to the outer membrane OOP (TC 1.B.6) superfamily. OmpA family. In terms of assembly, monomer and homodimer.

The protein localises to the cell outer membrane. With TolR probably plays a role in maintaining the position of the peptidoglycan cell wall in the periplasm. Acts as a porin with low permeability that allows slow penetration of small solutes; an internal gate slows down solute passage. This Atlantibacter hermannii (Escherichia hermannii) protein is Outer membrane protein A.